A 352-amino-acid chain; its full sequence is Biotin synthase (352 aa).

In terms of domain architecture, Radical SAM core spans 44–262; it reads NRVQVSTLLS…LAVARILMPQ (219 aa). C59, C63, and C66 together coordinate [4Fe-4S] cluster. [2Fe-2S] cluster-binding residues include C103, C134, C194, and R266.

Belongs to the radical SAM superfamily. Biotin synthase family. Homodimer. It depends on [4Fe-4S] cluster as a cofactor. [2Fe-2S] cluster is required as a cofactor.

The catalysed reaction is (4R,5S)-dethiobiotin + (sulfur carrier)-SH + 2 reduced [2Fe-2S]-[ferredoxin] + 2 S-adenosyl-L-methionine = (sulfur carrier)-H + biotin + 2 5'-deoxyadenosine + 2 L-methionine + 2 oxidized [2Fe-2S]-[ferredoxin]. Its pathway is cofactor biosynthesis; biotin biosynthesis; biotin from 7,8-diaminononanoate: step 2/2. Functionally, catalyzes the conversion of dethiobiotin (DTB) to biotin by the insertion of a sulfur atom into dethiobiotin via a radical-based mechanism. This chain is Biotin synthase, found in Pseudomonas syringae pv. tomato (strain ATCC BAA-871 / DC3000).